A 281-amino-acid chain; its full sequence is Leukocyte antigen CD37 (281 aa).

Residues 1-17 are Cytoplasmic-facing; it reads MSAQESCLSLIKYFLFV. A helical transmembrane segment spans residues 18–38; sequence FNLFFFVLGGLIFCFGTWILI. At 39–59 the chain is on the extracellular side; it reads DKTSFVSFVGLSFVPLQTWSK. The helical transmembrane segment at 60–74 threads the bilayer; the sequence is VLSVSGVLTMALALL. The Cytoplasmic portion of the chain corresponds to 75–85; the sequence is GCVGALKELRC. A helical transmembrane segment spans residues 86–111; it reads LLGLYFGMLLLLFATQITLGILISTQ. Residues 112 to 241 lie on the Extracellular side of the membrane; sequence RVRLERRVQE…RSLQKWLHNN (130 aa). 3 N-linked (GlcNAc...) asparagine glycosylation sites follow: asparagine 170, asparagine 183, and asparagine 188. The chain crosses the membrane as a helical span at residues 242–266; it reads IISIVGICLGVGLLELGFMTLSIFL. Topologically, residues 267–281 are cytoplasmic; it reads CRNLDHVYDRLARYR.

The protein belongs to the tetraspanin (TM4SF) family. Interacts with SCIMP. Interacts with SOCS3. Interacts with DECTIN1/CLEC7A. Tyrosine phosphorylated; leading to activation of downstream signaling pathways. In terms of tissue distribution, B-lymphocytes.

It localises to the cell membrane. Its function is as follows. Structural component of specialized membrane microdomains known as tetraspanin-enriched microdomains (TERMs), which act as platforms for receptor clustering and signaling. Participates thereby in diverse biological functions such as cell signal transduction, adhesion, migration and protein trafficking. Upon ligand binding, two signaling pathways are activated, one acting through phosphorylation by LYN leading to cell death or a survival pathway with activation of GSK3B. Plays an essential role essential for clustering of integrin ITGA4/ITGB1 and promotes its mobility in the plasma membrane of B-cells. In turn, participates in ITGA4/ITGB1 integrin-mediated antiapoptotic signaling through AKT. Plays also a role in the migration of dendritic cells and neutrophils to draining lymph nodes, as well as in their integrin-mediated adhesion. Negatively regulates IL-6 responses through direct interaction with SOCS3 thereby preventing constitutive IL-6 signaling. Alternatively, inhibition of IL-6 signaling can also occur via interaction and stabilization of DECTIN1/CLEC7A at the cell membrane to inhibit its ability to promote the production of IL-6. This Rattus norvegicus (Rat) protein is Leukocyte antigen CD37 (Cd37).